Here is a 317-residue protein sequence, read N- to C-terminus: tRNA dimethylallyltransferase (317 aa).

16–23 (GPTASGKS) lines the ATP pocket. 18-23 (TASGKS) provides a ligand contact to substrate. 3 interaction with substrate tRNA regions span residues 41-44 (DSAQ), 165-169 (QRIQR), and 247-252 (RCVGYR).

Belongs to the IPP transferase family. In terms of assembly, monomer. It depends on Mg(2+) as a cofactor.

It catalyses the reaction adenosine(37) in tRNA + dimethylallyl diphosphate = N(6)-dimethylallyladenosine(37) in tRNA + diphosphate. Catalyzes the transfer of a dimethylallyl group onto the adenine at position 37 in tRNAs that read codons beginning with uridine, leading to the formation of N6-(dimethylallyl)adenosine (i(6)A). This Nitrosomonas europaea (strain ATCC 19718 / CIP 103999 / KCTC 2705 / NBRC 14298) protein is tRNA dimethylallyltransferase.